The sequence spans 122 residues: S-adenosylmethionine decarboxylase proenzyme (122 aa).

The Schiff-base intermediate with substrate; via pyruvic acid role is filled by serine 63. Pyruvic acid (Ser); by autocatalysis is present on serine 63. The active-site Proton acceptor; for processing activity is histidine 68. The active-site Proton donor; for catalytic activity is cysteine 83.

It belongs to the prokaryotic AdoMetDC family. Type 1 subfamily. As to quaternary structure, heterotetramer of two alpha and two beta chains arranged as a dimer of alpha/beta heterodimers. The cofactor is pyruvate. Post-translationally, is synthesized initially as an inactive proenzyme. Formation of the active enzyme involves a self-maturation process in which the active site pyruvoyl group is generated from an internal serine residue via an autocatalytic post-translational modification. Two non-identical subunits are generated from the proenzyme in this reaction, and the pyruvate is formed at the N-terminus of the alpha chain, which is derived from the carboxyl end of the proenzyme. The post-translation cleavage follows an unusual pathway, termed non-hydrolytic serinolysis, in which the side chain hydroxyl group of the serine supplies its oxygen atom to form the C-terminus of the beta chain, while the remainder of the serine residue undergoes an oxidative deamination to produce ammonia and the pyruvoyl group blocking the N-terminus of the alpha chain.

It catalyses the reaction S-adenosyl-L-methionine + H(+) = S-adenosyl 3-(methylsulfanyl)propylamine + CO2. It participates in amine and polyamine biosynthesis; S-adenosylmethioninamine biosynthesis; S-adenosylmethioninamine from S-adenosyl-L-methionine: step 1/1. In terms of biological role, catalyzes the decarboxylation of S-adenosylmethionine to S-adenosylmethioninamine (dcAdoMet), the propylamine donor required for the synthesis of the polyamines spermine and spermidine from the diamine putrescine. In Methanococcus maripaludis (strain DSM 14266 / JCM 13030 / NBRC 101832 / S2 / LL), this protein is S-adenosylmethionine decarboxylase proenzyme.